The following is a 915-amino-acid chain: Mitogen-activated protein kinase kinae kinase MST11 (915 aa).

Disordered regions lie at residues 1-65 (MAML…PKHW), 134-171 (KKRN…NPSV), and 183-249 (GMAY…TRTD). Over residues 26–45 (AQASYPPSRRAPAVPPASQS) the composition is skewed to low complexity. In terms of domain architecture, SAM spans 65–128 (WDEDKVCEYL…FLSIKKLRTK (64 aa)). Composition is skewed to low complexity over residues 152–163 (SESPSKPFHSSS) and 188–203 (PSRP…PLPS). The Ras-associating domain occupies 263 to 353 (NQDVIRVIST…NRLILRRVPA (91 aa)). Residues 641-911 (WMKGALIGQG…ADDLMLSPFL (271 aa)) form the Protein kinase domain. Residues 647–655 (IGQGSFGCV) and Lys-670 each bind ATP.

Belongs to the protein kinase superfamily. STE Ser/Thr protein kinase family. MAP kinase kinase kinase subfamily. Interacts with the adapter protein MST50.

It catalyses the reaction L-seryl-[protein] + ATP = O-phospho-L-seryl-[protein] + ADP + H(+). The catalysed reaction is L-threonyl-[protein] + ATP = O-phospho-L-threonyl-[protein] + ADP + H(+). Mitogen-activated protein kinase kinase kinase; part of the MST11-MST7-PMK1 MAP kinase (MAPK) cascade that is essential for appressorium formation, penetration and invasive growth. The MST11-MST7-PMK1 MAP kinase cascade transduces signals from the cell surface sensors MDB2 and SHO1 that recognize various surface signals such as surface hydrophobicity, cutin monomers, and rice leaf waxes. MST11 acts as the upstream MAPKKK that directly phosphorylates MAPKK MST7. MST11 but not MST7 may also be involved in the OSM1 MAPK pathway in response to osmotic stresses. In Pyricularia oryzae (strain 70-15 / ATCC MYA-4617 / FGSC 8958) (Rice blast fungus), this protein is Mitogen-activated protein kinase kinae kinase MST11.